A 49-amino-acid polypeptide reads, in one-letter code: MGKRKANHIVPGMNAASAQGQGTGYNEEFANEPLTAAQRQNNKKRKKNQ.

Residues Met1–Gln49 form a disordered region.

This sequence belongs to the SspO family.

It is found in the spore core. This Bacillus cytotoxicus (strain DSM 22905 / CIP 110041 / 391-98 / NVH 391-98) protein is Small, acid-soluble spore protein O.